Consider the following 213-residue polypeptide: NADH-quinone oxidoreductase subunit C (213 aa).

It belongs to the complex I 30 kDa subunit family. NDH-1 is composed of 15 different subunits. Subunits NuoB, C, D, E, F, and G constitute the peripheral sector of the complex.

It localises to the cell membrane. It carries out the reaction a quinone + NADH + 5 H(+)(in) = a quinol + NAD(+) + 4 H(+)(out). Functionally, NDH-1 shuttles electrons from NADH, via FMN and iron-sulfur (Fe-S) centers, to quinones in the respiratory chain. The immediate electron acceptor for the enzyme in this species is believed to be a menaquinone. Couples the redox reaction to proton translocation (for every two electrons transferred, four hydrogen ions are translocated across the cytoplasmic membrane), and thus conserves the redox energy in a proton gradient. This Deinococcus geothermalis (strain DSM 11300 / CIP 105573 / AG-3a) protein is NADH-quinone oxidoreductase subunit C.